Consider the following 274-residue polypeptide: Large ribosomal subunit protein uL2cz/uL2cy (274 aa).

2 disordered regions span residues 1–21 (MAIHLYKTSTPSTRNGAVDSQ) and 224–252 (NPVDHPHGGGEGRAPIGRKKPVTPWGYPA).

The protein belongs to the universal ribosomal protein uL2 family. In terms of assembly, part of the 50S ribosomal subunit.

It localises to the plastid. The protein localises to the chloroplast. The protein is Large ribosomal subunit protein uL2cz/uL2cy (rpl2-A) of Olimarabidopsis pumila (Dwarf rocket).